The chain runs to 391 residues: Galactokinase (391 aa).

34-37 (EHTD) contacts substrate. 121–127 (GAGLSSS) contributes to the ATP binding site. Mg(2+) contacts are provided by serine 127 and glutamate 159. Aspartate 171 acts as the Proton acceptor in catalysis. Tyrosine 220 contacts substrate.

The protein belongs to the GHMP kinase family. GalK subfamily.

The protein localises to the cytoplasm. The enzyme catalyses alpha-D-galactose + ATP = alpha-D-galactose 1-phosphate + ADP + H(+). The protein operates within carbohydrate metabolism; galactose metabolism. Its function is as follows. Catalyzes the transfer of the gamma-phosphate of ATP to D-galactose to form alpha-D-galactose-1-phosphate (Gal-1-P). The chain is Galactokinase from Roseiflexus sp. (strain RS-1).